Reading from the N-terminus, the 341-residue chain is Protein pelota homolog (341 aa).

This sequence belongs to the eukaryotic release factor 1 family. Pelota subfamily. Monomer. Requires a divalent metal cation as cofactor.

It localises to the cytoplasm. May function in recognizing stalled ribosomes, interact with stem-loop structures in stalled mRNA molecules, and effect endonucleolytic cleavage of the mRNA. May play a role in the release non-functional ribosomes and degradation of damaged mRNAs. Has endoribonuclease activity. The polypeptide is Protein pelota homolog (Methanoculleus marisnigri (strain ATCC 35101 / DSM 1498 / JR1)).